A 613-amino-acid chain; its full sequence is Dihydroxy-acid dehydratase (613 aa).

Asp81 provides a ligand contact to Mg(2+). Cys122 serves as a coordination point for [2Fe-2S] cluster. Mg(2+)-binding residues include Asp123 and Lys124. An N6-carboxylysine modification is found at Lys124. Cys193 provides a ligand contact to [2Fe-2S] cluster. Residue Glu489 participates in Mg(2+) binding. The active-site Proton acceptor is the Ser515.

The protein belongs to the IlvD/Edd family. In terms of assembly, homodimer. Requires [2Fe-2S] cluster as cofactor. Mg(2+) serves as cofactor.

The catalysed reaction is (2R)-2,3-dihydroxy-3-methylbutanoate = 3-methyl-2-oxobutanoate + H2O. It catalyses the reaction (2R,3R)-2,3-dihydroxy-3-methylpentanoate = (S)-3-methyl-2-oxopentanoate + H2O. Its pathway is amino-acid biosynthesis; L-isoleucine biosynthesis; L-isoleucine from 2-oxobutanoate: step 3/4. The protein operates within amino-acid biosynthesis; L-valine biosynthesis; L-valine from pyruvate: step 3/4. Functionally, functions in the biosynthesis of branched-chain amino acids. Catalyzes the dehydration of (2R,3R)-2,3-dihydroxy-3-methylpentanoate (2,3-dihydroxy-3-methylvalerate) into 2-oxo-3-methylpentanoate (2-oxo-3-methylvalerate) and of (2R)-2,3-dihydroxy-3-methylbutanoate (2,3-dihydroxyisovalerate) into 2-oxo-3-methylbutanoate (2-oxoisovalerate), the penultimate precursor to L-isoleucine and L-valine, respectively. This Pseudomonas fluorescens (strain Pf0-1) protein is Dihydroxy-acid dehydratase.